The following is a 448-amino-acid chain: Glucose-6-phosphate isomerase (448 aa).

The active-site Proton donor is Glu290. Catalysis depends on residues His311 and Lys425.

The protein belongs to the GPI family.

Its subcellular location is the cytoplasm. The enzyme catalyses alpha-D-glucose 6-phosphate = beta-D-fructose 6-phosphate. Its pathway is carbohydrate biosynthesis; gluconeogenesis. It participates in carbohydrate degradation; glycolysis; D-glyceraldehyde 3-phosphate and glycerone phosphate from D-glucose: step 2/4. In terms of biological role, catalyzes the reversible isomerization of glucose-6-phosphate to fructose-6-phosphate. The sequence is that of Glucose-6-phosphate isomerase from Lactococcus lactis subsp. cremoris (strain SK11).